The following is a 250-amino-acid chain: 3-deoxy-manno-octulosonate cytidylyltransferase (250 aa).

This sequence belongs to the KdsB family.

Its subcellular location is the cytoplasm. The catalysed reaction is 3-deoxy-alpha-D-manno-oct-2-ulosonate + CTP = CMP-3-deoxy-beta-D-manno-octulosonate + diphosphate. It functions in the pathway nucleotide-sugar biosynthesis; CMP-3-deoxy-D-manno-octulosonate biosynthesis; CMP-3-deoxy-D-manno-octulosonate from 3-deoxy-D-manno-octulosonate and CTP: step 1/1. Its pathway is bacterial outer membrane biogenesis; lipopolysaccharide biosynthesis. In terms of biological role, activates KDO (a required 8-carbon sugar) for incorporation into bacterial lipopolysaccharide in Gram-negative bacteria. This Syntrophotalea carbinolica (strain DSM 2380 / NBRC 103641 / GraBd1) (Pelobacter carbinolicus) protein is 3-deoxy-manno-octulosonate cytidylyltransferase.